We begin with the raw amino-acid sequence, 258 residues long: Small ribosomal subunit protein eS1 (258 aa).

Residues 235 to 258 are disordered; sequence VASSGDAGSAVRRDGYEPPVQESV.

This sequence belongs to the eukaryotic ribosomal protein eS1 family. In terms of assembly, component of the small ribosomal subunit. Mature ribosomes consist of a small (40S) and a large (60S) subunit. The 40S subunit contains about 33 different proteins and 1 molecule of RNA (18S). The 60S subunit contains about 49 different proteins and 3 molecules of RNA (28S, 5.8S and 5S).

It is found in the cytoplasm. The polypeptide is Small ribosomal subunit protein eS1 (Trichoplax adhaerens (Trichoplax reptans)).